The following is an 831-amino-acid chain: Prickle-like protein 1 (831 aa).

The PET domain maps to 14–122; the sequence is FGCQRSSTSD…TIKLLSRAVM (109 aa). 3 consecutive LIM zinc-binding domains span residues 124–189, 189–249, and 249–313; these read AVCE…LLKP, PRCS…LYAE, and EYCE…EDVH. Positions 313 to 342 are disordered; it reads HASDSSDSAFQSARSRDSRRSVRMGKSSRS. Phosphoserine occurs at positions 315, 591, and 594. 2 disordered regions span residues 663–688 and 763–831; these read FEERGSRSHHHRRRRSRKSRSDNALN and CSSS…CIIS. The span at 669-680 shows a compositional bias: basic residues; it reads RSHHHRRRRSRK. A Phosphoserine modification is found at S683. Over residues 815–831 the composition is skewed to basic residues; that stretch reads TKSKKKKGHKGKNCIIS. C828 is subject to Cysteine methyl ester. C828 carries the S-farnesyl cysteine lipid modification. Positions 829-831 are cleaved as a propeptide — removed in mature form; that stretch reads IIS.

It belongs to the prickle / espinas / testin family. In terms of assembly, interacts with REST. As to expression, expressed at highest levels in placenta and at lower levels in lung, liver, kidney and pancreas. Expressed in thalamus, hippocampus, cerebral cortex, and cerebellum (in neurons rather than glia).

The protein localises to the nucleus membrane. It is found in the cytoplasm. Its subcellular location is the cytosol. In terms of biological role, involved in the planar cell polarity pathway that controls convergent extension during gastrulation and neural tube closure. Convergent extension is a complex morphogenetic process during which cells elongate, move mediolaterally, and intercalate between neighboring cells, leading to convergence toward the mediolateral axis and extension along the anteroposterior axis. Necessary for nuclear localization of REST. May serve as nuclear receptor. This chain is Prickle-like protein 1 (PRICKLE1), found in Homo sapiens (Human).